Here is a 394-residue protein sequence, read N- to C-terminus: NAD(P)H-quinone oxidoreductase subunit H (394 aa).

The protein belongs to the complex I 49 kDa subunit family. NDH-1 can be composed of about 15 different subunits; different subcomplexes with different compositions have been identified which probably have different functions.

It localises to the cellular thylakoid membrane. The catalysed reaction is a plastoquinone + NADH + (n+1) H(+)(in) = a plastoquinol + NAD(+) + n H(+)(out). It carries out the reaction a plastoquinone + NADPH + (n+1) H(+)(in) = a plastoquinol + NADP(+) + n H(+)(out). In terms of biological role, NDH-1 shuttles electrons from an unknown electron donor, via FMN and iron-sulfur (Fe-S) centers, to quinones in the respiratory and/or the photosynthetic chain. The immediate electron acceptor for the enzyme in this species is believed to be plastoquinone. Couples the redox reaction to proton translocation, and thus conserves the redox energy in a proton gradient. Cyanobacterial NDH-1 also plays a role in inorganic carbon-concentration. This Prochlorococcus marinus (strain NATL2A) protein is NAD(P)H-quinone oxidoreductase subunit H.